Here is a 96-residue protein sequence, read N- to C-terminus: Large ribosomal subunit protein eL43 (96 aa).

The C4-type zinc finger occupies Cys-41–Cys-62.

The protein belongs to the eukaryotic ribosomal protein eL43 family. Requires Zn(2+) as cofactor.

In Methanococcus maripaludis (strain C6 / ATCC BAA-1332), this protein is Large ribosomal subunit protein eL43.